Consider the following 182-residue polypeptide: Large ribosomal subunit protein uL16 (182 aa).

The protein belongs to the universal ribosomal protein uL16 family.

The chain is Large ribosomal subunit protein uL16 from Pyrobaculum neutrophilum (strain DSM 2338 / JCM 9278 / NBRC 100436 / V24Sta) (Thermoproteus neutrophilus).